Consider the following 453-residue polypeptide: MTTDTIVAQATAPGRGGVGIIRISGDKASDVAMAVLGHLPKTRYADYCDFKSASGQVIDQGIALFFKGPNSFTGEDVLELQGHGGQIVLDMLIKRVMEVGGIRIAKPGEFSEQAFMNDKLDLTQAEAIADLIDATSEQAAKSALQSLQGEFSKEVHELVDQVTNLRLYVEAAIDFPDEEVDFLSDGKIANALYKIIDKLDLVQASAKQGSIIREGMKVVIAGRPNAGKSSLLNALAGKESAIVTEIAGTTRDVLREHIHLDGMPLHIIDTAGLRDTTDTVEQIGIERAWNEINSADRVLFMVDGTTTAAVDPHTIWPDFVDRLPSNLGVTVIRNKADLTGEDLMMTEEQGYSVYRISAKTGLGVEELKQHLKSLMGYQSNLEGGFIARRRHLEALELAAGHLQLGKEQLEVYLAGELLAEELRMCQLALSEITGRFTSDDLLGKIFSSFCIGK.

(6S)-5-formyl-5,6,7,8-tetrahydrofolate-binding residues include arginine 22, glutamate 79, and lysine 119. Positions 215-376 constitute a TrmE-type G domain; sequence GMKVVIAGRP…LKQHLKSLMG (162 aa). Asparagine 225 serves as a coordination point for K(+). Residues 225-230, 244-250, 269-272, and 334-337 contribute to the GTP site; these read NAGKSS, TEIAGTT, DTAG, and NKAD. Residue serine 229 participates in Mg(2+) binding. Residues threonine 244, isoleucine 246, and threonine 249 each contribute to the K(+) site. Threonine 250 contributes to the Mg(2+) binding site. Lysine 453 contributes to the (6S)-5-formyl-5,6,7,8-tetrahydrofolate binding site.

It belongs to the TRAFAC class TrmE-Era-EngA-EngB-Septin-like GTPase superfamily. TrmE GTPase family. Homodimer. Heterotetramer of two MnmE and two MnmG subunits. The cofactor is K(+).

It localises to the cytoplasm. Exhibits a very high intrinsic GTPase hydrolysis rate. Involved in the addition of a carboxymethylaminomethyl (cmnm) group at the wobble position (U34) of certain tRNAs, forming tRNA-cmnm(5)s(2)U34. This Shewanella baltica (strain OS185) protein is tRNA modification GTPase MnmE.